The primary structure comprises 137 residues: Large ribosomal subunit protein uL16c (137 aa).

Residues 1–21 (MLSPKRTKFRRHHRGRMKGKA) form a disordered region.

This sequence belongs to the universal ribosomal protein uL16 family. In terms of assembly, part of the 50S ribosomal subunit.

The protein localises to the plastid. It is found in the chloroplast. This is Large ribosomal subunit protein uL16c from Tupiella akineta (Green alga).